Consider the following 138-residue polypeptide: Small ribosomal subunit protein uS11c (138 aa).

The interval 1–21 (MAKSIPKIGSRKTGRIGSRKH) is disordered. Positions 9–21 (GSRKTGRIGSRKH) are enriched in basic residues.

Belongs to the universal ribosomal protein uS11 family. Part of the 30S ribosomal subunit.

It localises to the plastid. It is found in the chloroplast. In Pisum sativum (Garden pea), this protein is Small ribosomal subunit protein uS11c.